Consider the following 224-residue polypeptide: ATP synthase subunit a (224 aa).

The next 6 membrane-spanning stretches (helical) occupy residues 17-37, 72-92, 99-119, 125-145, 155-175, and 184-204; these read LSLNWLSTFLGLLMIPSIYWL, IFISLFSLILFNNFMGLFPYI, LTLTLSLALPLWLCFMLYGWI, MFAHLVPQGTPAILMPFMVCI, GTLAVRLTANMIAGHLLLTLL, and YLLVTFLLVAQIALLVLESAV.

The protein belongs to the ATPase A chain family. F-type ATPases have 2 components, CF(1) - the catalytic core - and CF(0) - the membrane proton channel. CF(1) has five subunits: alpha(3), beta(3), gamma(1), delta(1), epsilon(1). CF(0) has three main subunits: a, b and c.

The protein localises to the mitochondrion inner membrane. Its function is as follows. Mitochondrial membrane ATP synthase (F(1)F(0) ATP synthase or Complex V) produces ATP from ADP in the presence of a proton gradient across the membrane which is generated by electron transport complexes of the respiratory chain. F-type ATPases consist of two structural domains, F(1) - containing the extramembraneous catalytic core and F(0) - containing the membrane proton channel, linked together by a central stalk and a peripheral stalk. During catalysis, ATP synthesis in the catalytic domain of F(1) is coupled via a rotary mechanism of the central stalk subunits to proton translocation. Key component of the proton channel; it may play a direct role in the translocation of protons across the membrane. In Drosophila yakuba (Fruit fly), this protein is ATP synthase subunit a (mt:ATPase6).